The primary structure comprises 1957 residues: Sporulation-specific protein 15 (1957 aa).

Low complexity-rich tracts occupy residues 1 to 12 and 19 to 28; these read MSNQSSSGSNTS and ASSLVSSAAS. Residues 1-102 are disordered; sequence MSNQSSSGSN…STASSALPLT (102 aa). Positions 58 to 83 are enriched in basic and acidic residues; it reads SQHEDSSEELKRQEVRGMRRHSDLSI. Over residues 90–102 the composition is skewed to polar residues; sequence SEGSTASSALPLT. Position 105 is a phosphoserine (Ser105). 4 coiled-coil regions span residues 199–785, 804–1235, 1320–1471, and 1481–1723; these read KQSE…FTSL, VNMQ…DLLD, KVVA…SLDD, and EKLG…EQHE.

Belongs to the MPC70 family. As to quaternary structure, monomer.

The protein localises to the cytoplasm. It localises to the cytoskeleton. It is found in the microtubule organizing center. Its subcellular location is the spindle pole body. Its function is as follows. Has a role in the initiation of spore membrane formation. This Schizosaccharomyces pombe (strain 972 / ATCC 24843) (Fission yeast) protein is Sporulation-specific protein 15 (spo15).